Reading from the N-terminus, the 547-residue chain is Chaperonin GroEL (547 aa).

ATP-binding positions include 29–32 (TLGP), 86–90 (DGTTT), Gly413, and Asp498.

It belongs to the chaperonin (HSP60) family. In terms of assembly, forms a cylinder of 14 subunits composed of two heptameric rings stacked back-to-back. Interacts with the co-chaperonin GroES.

It localises to the cytoplasm. The enzyme catalyses ATP + H2O + a folded polypeptide = ADP + phosphate + an unfolded polypeptide.. Together with its co-chaperonin GroES, plays an essential role in assisting protein folding. The GroEL-GroES system forms a nano-cage that allows encapsulation of the non-native substrate proteins and provides a physical environment optimized to promote and accelerate protein folding. This is Chaperonin GroEL from Herpetosiphon aurantiacus (strain ATCC 23779 / DSM 785 / 114-95).